A 389-amino-acid polypeptide reads, in one-letter code: Sulfate adenylyltransferase (389 aa).

It belongs to the sulfate adenylyltransferase family.

It carries out the reaction sulfate + ATP + H(+) = adenosine 5'-phosphosulfate + diphosphate. It participates in sulfur metabolism; hydrogen sulfide biosynthesis; sulfite from sulfate: step 1/3. This chain is Sulfate adenylyltransferase, found in Hyperthermus butylicus (strain DSM 5456 / JCM 9403 / PLM1-5).